Here is a 1142-residue protein sequence, read N- to C-terminus: Envelopment polyprotein (1142 aa).

The N-terminal stretch at 1-21 (MSKFCLCLSLLGVLLLQVCDT) is a signal peptide. The Lumenal segment spans residues 22 to 489 (RSLLELKIEC…LCVPGIHGWS (468 aa)). Intrachain disulfides connect Cys31–Cys156, Cys65–Cys162, Cys114–Cys133, Cys138–Cys143, Cys180–Cys190, and Cys215–Cys253. Asn139 is a glycosylation site (N-linked (GlcNAc...) asparagine; by host). The N-linked (GlcNAc...) asparagine; by host glycan is linked to Asn353. Intrachain disulfides connect Cys382–Cys441, Cys386–Cys395, Cys411–Cys430, and Cys458–Cys481. N-linked (GlcNAc...) asparagine; by host glycosylation is present at Asn405. A helical membrane pass occupies residues 490–510 (TIALLATFCFGWLLIPIISLV). Topologically, residues 511–633 (SIKIMLLFAY…LSVFRYRSRC (123 aa)) are cytoplasmic. The binding to the ribonucleoprotein stretch occupies residues 522 to 539 (CSKYSNDSKFRLLIEKVK). 2 CCHC-type zinc fingers span residues 551 to 571 (CEVCQQECEMAKELESHKKSC) and 576 to 597 (CPYCMNPTESTESALQAHFKVC). Binding to the ribonucleoprotein stretches follow at residues 594 to 611 (FKVCKLTTRFQENLRKSL), 598 to 609 (KLTTRFQENLRK), and 617 to 631 (KRGCYRTLSVFRYRS). The region spanning 617–640 (KRGCYRTLSVFRYRSRCFVGLVWC) is the ITAM domain. Residues 621–624 (YRTL) carry the YxxL motif. A helical membrane pass occupies residues 634 to 654 (FVGLVWCILLVLELVIWAASA). The Lumenal segment spans residues 655–1110 (DTVEIKTGWT…EWLMGILSGN (456 aa)). 8 disulfide bridges follow: Cys741–Cys776, Cys745–Cys783, Cys757–Cys890, Cys771–Cys901, Cys786–Cys909, Cys812–Cys821, Cys829–Cys838, and Cys869–Cys873. Residues 763–783 (YEFETGWGCNPGDCPGVGTGC) form a fusion loop region. N-linked (GlcNAc...) asparagine; by host glycosylation occurs at Asn933. 5 disulfide bridges follow: Cys975/Cys1005, Cys998/Cys1050, Cys1015/Cys1020, Cys1051/Cys1056, and Cys1090/Cys1094. The helical transmembrane segment at 1111–1131 (WMVVAVLVVLLILSIFLFSLC) threads the bilayer. Residues 1127 to 1142 (LFSLCCPRRVVHKKSS) form a binding to the ribonucleoprotein region. Over 1132 to 1142 (CPRRVVHKKSS) the chain is Cytoplasmic.

It belongs to the hantavirus envelope glycoprotein family. In terms of assembly, homodimer. Homotetramer; forms heterotetrameric Gn-Gc spikes in the pre-fusion conformation. Interacts (via C-terminus) with the nucleoprotein. Interacts with host TUFM; this interaction contributes to the virus-induced degradation of mitochondria by autophagy, which leads to degradation of host MAVS and inhibition of type I interferon (IFN) responses. Interacts with host MAP1LC3B; this interaction contributes to the virus-induced degradation of mitochondria by autophagy, which leads to degradation of host MAVS and inhibition of type I interferon (IFN) responses. As to quaternary structure, homodimer. Homotetramer; forms heterotetrameric Gn-Gc spikes in the pre-fusion conformation. Homotrimer; forms homotrimer in the post-fusion conformation at acidic pH. Interacts (via C-terminus) with the nucleoprotein. Envelope polyprotein precursor is quickly cleaved in vivo just after synthesis, presumably by host signal peptidase.

Its subcellular location is the virion membrane. The protein localises to the host cell surface. It is found in the host Golgi apparatus membrane. The protein resides in the host endoplasmic reticulum membrane. It localises to the host mitochondrion. Functionally, forms homotetramers with glycoprotein C at the surface of the virion. Attaches the virion to host cell receptors including integrin alpha5/ITGB1. This attachment induces virion internalization predominantly through clathrin-dependent endocytosis. Mediates the assembly and budding of infectious virus particles through its interaction with the nucleocapsid protein and the viral genome. May dysregulate normal immune and endothelial cell responses through an ITAM motif. Translocates to mitochondria, binds to host TUFM and recruits MAP1LC3B. These interactions induce mitochondrial autophagy and therefore destruction of host MAVS leading to inhibition of type I interferon (IFN) responses. Concomitant breakdown of glycoprotein N is apparently prevented by the nucleoprotein that may inhibit Gn-stimulated autophagosome-lysosome fusion. Interacts with the viral genomic RNA. In terms of biological role, forms homotetramers with glycoprotein N at the surface of the virion. Attaches the virion to host cell receptors including integrin ITGAV/ITGB3. This attachment induces virion internalization predominantly through clathrin-dependent endocytosis. Class II fusion protein that promotes fusion of viral membrane with host endosomal membrane after endocytosis of the virion. The protein is Envelopment polyprotein (GP) of Microtus pennsylvanicus (Meadow vole).